A 104-amino-acid chain; its full sequence is Large ribosomal subunit protein uL23 (104 aa).

This sequence belongs to the universal ribosomal protein uL23 family. In terms of assembly, part of the 50S ribosomal subunit. Contacts protein L29, and trigger factor when it is bound to the ribosome.

In terms of biological role, one of the early assembly proteins it binds 23S rRNA. One of the proteins that surrounds the polypeptide exit tunnel on the outside of the ribosome. Forms the main docking site for trigger factor binding to the ribosome. The chain is Large ribosomal subunit protein uL23 from Leptospira borgpetersenii serovar Hardjo-bovis (strain JB197).